Consider the following 309-residue polypeptide: Gamma-hemolysin component A (309 aa).

An N-terminal signal peptide occupies residues 1–29; that stretch reads MIKNKILTATLAVGLIAPLANPFIEISKA.

The protein belongs to the aerolysin family. As to quaternary structure, toxicity requires sequential binding and synergistic association of a class S and a class F component which form heterooligomeric complexes. HlgA (class S) associates with HlgB (class F) thus forming an AB toxin in strains producing both gamma-hemolysins and leukocidins. HlgA and LukF-PV can also form a complex.

The protein resides in the secreted. In terms of biological role, toxin that seems to act by forming pores in the membrane of the cell. Has a hemolytic and a leucotoxic activity. This Staphylococcus aureus (strain MRSA252) protein is Gamma-hemolysin component A (hlgA).